A 146-amino-acid polypeptide reads, in one-letter code: Large ribosomal subunit protein bL19 (146 aa).

Belongs to the bacterial ribosomal protein bL19 family.

Its function is as follows. This protein is located at the 30S-50S ribosomal subunit interface and may play a role in the structure and function of the aminoacyl-tRNA binding site. This Bartonella quintana (strain Toulouse) (Rochalimaea quintana) protein is Large ribosomal subunit protein bL19.